A 266-amino-acid polypeptide reads, in one-letter code: Protein-ADP-ribose hydrolase (266 aa).

One can recognise a Macro domain in the interval 74–265 (TDLKDLKPIK…LYKEAFNRDA (192 aa)). Residues D93, I94, and N107 each coordinate ADP-D-ribose. Zn(2+) contacts are provided by C113, H118, and C120. 7 residues coordinate ADP-D-ribose: C120, I121, D122, S212, T213, G214, and F216.

This sequence belongs to the MacroD-type family. Zn-Macro subfamily. The cofactor is Zn(2+).

The catalysed reaction is 4-O-(ADP-D-ribosyl)-L-aspartyl-[protein] + H2O = L-aspartyl-[protein] + ADP-D-ribose + H(+). Its function is as follows. ADP-ribosylhydrolase that specifically reverses the SirTM-mediated mono-ADP-ribosylation at an asparatate residue of GcvH-L, by releasing ADP-ribose from the target protein. May play a role in the regulation of the response to host-induced oxidative stress. This Staphylococcus aureus (strain MSSA476) protein is Protein-ADP-ribose hydrolase.